The primary structure comprises 140 residues: Large ribosomal subunit protein uL11 (140 aa).

It belongs to the universal ribosomal protein uL11 family. In terms of assembly, part of the ribosomal stalk of the 50S ribosomal subunit. Interacts with L10 and the large rRNA to form the base of the stalk. L10 forms an elongated spine to which L12 dimers bind in a sequential fashion forming a multimeric L10(L12)X complex. One or more lysine residues are methylated.

In terms of biological role, forms part of the ribosomal stalk which helps the ribosome interact with GTP-bound translation factors. This is Large ribosomal subunit protein uL11 from Karelsulcia muelleri (strain GWSS) (Sulcia muelleri).